Reading from the N-terminus, the 987-residue chain is Eukaryotic translation initiation factor 3 subunit A (987 aa).

The stretch at 93–122 forms a coiled coil; sequence LHLATDKAEQARSQADALEEALDVDDLEAD. Residues 316-513 form the PCI domain; sequence LQLIASSVVL…GVVIFGNLGI (198 aa). Coiled coils occupy residues 556 to 742 and 797 to 858; these read TVEK…EKNR and LKIE…REEL. Basic and acidic residues predominate over residues 808–859; sequence QEEEEARKQEEAERLKKVEAERKANLDKAFEKQRQREIELEEKSRREREELL. Residues 808 to 987 form a disordered region; the sequence is QEEEEARKQE…GSSRPRPTQR (180 aa). Low complexity predominate over residues 872 to 894; the sequence is PTVTPVGTTAPAAAAAAAGAPAA. Polar residues-rich tracts occupy residues 905–916 and 976–987; these read TEVSGPSAPTSS and TFGSSRPRPTQR.

Belongs to the eIF-3 subunit A family. Component of the eukaryotic translation initiation factor 3 (eIF-3) complex. Binds to the translation initiation factor TIF3H1.

It localises to the cytoplasm. Functionally, RNA-binding component of the eukaryotic translation initiation factor 3 (eIF-3) complex, which is involved in protein synthesis of a specialized repertoire of mRNAs and, together with other initiation factors, stimulates binding of mRNA and methionyl-tRNAi to the 40S ribosome. The eIF-3 complex specifically targets and initiates translation of a subset of mRNAs involved in cell proliferation. The chain is Eukaryotic translation initiation factor 3 subunit A (TIF3A1) from Arabidopsis thaliana (Mouse-ear cress).